The primary structure comprises 206 residues: Small ribosomal subunit protein uS7 (206 aa).

Positions Met1–Pro19 are enriched in acidic residues. The tract at residues Met1–Lys25 is disordered. The residue at position 2 (Ser2) is an N-acetylserine.

It belongs to the universal ribosomal protein uS7 family. As to quaternary structure, part of the 30S ribosomal subunit.

Its function is as follows. One of the primary rRNA binding proteins, it binds directly to 16S rRNA where it nucleates assembly of the head domain of the 30S subunit. Is located at the subunit interface close to the decoding center. The chain is Small ribosomal subunit protein uS7 from Haloarcula marismortui (strain ATCC 43049 / DSM 3752 / JCM 8966 / VKM B-1809) (Halobacterium marismortui).